Here is a 124-residue protein sequence, read N- to C-terminus: Small ribosomal subunit protein eS25 (124 aa).

Basic and acidic residues predominate over residues 1–22; sequence MPPKDSKQKKDTSKAKKDKDPV. The disordered stretch occupies residues 1–37; it reads MPPKDSKQKKDTSKAKKDKDPVNKSGGKAKKKKWSKG. Residues 27 to 37 show a composition bias toward basic residues; it reads GKAKKKKWSKG.

It belongs to the eukaryotic ribosomal protein eS25 family. In terms of assembly, component of the small ribosomal subunit.

It is found in the cytoplasm. Component of the small ribosomal subunit. The ribosome is a large ribonucleoprotein complex responsible for the synthesis of proteins in the cell. The protein is Small ribosomal subunit protein eS25 (rps25) of Ictalurus punctatus (Channel catfish).